Consider the following 198-residue polypeptide: Ribonuclease HII (198 aa).

Residues R3–Q194 form the RNase H type-2 domain. A divalent metal cation is bound by residues D9, E10, and D101.

Belongs to the RNase HII family. It depends on Mn(2+) as a cofactor. Mg(2+) is required as a cofactor.

The protein localises to the cytoplasm. The catalysed reaction is Endonucleolytic cleavage to 5'-phosphomonoester.. Functionally, endonuclease that specifically degrades the RNA of RNA-DNA hybrids. The chain is Ribonuclease HII from Laribacter hongkongensis (strain HLHK9).